An 82-amino-acid chain; its full sequence is MWLKIQVFLLAITLITLGIQAEPNSSPNNPLIEEEARACAGLYKKCGKGASPCCEDRPCKCDLAMGNCICKKKFIEFFGGGK.

Residues 1-21 form the signal peptide; it reads MWLKIQVFLLAITLITLGIQA. The propeptide occupies 22–37; it reads EPNSSPNNPLIEEEAR. 4 cysteine pairs are disulfide-bonded: Cys-39–Cys-54, Cys-46–Cys-59, Cys-53–Cys-70, and Cys-61–Cys-68. A propeptide spanning residues 72 to 82 is cleaved from the precursor; it reads KKFIEFFGGGK.

Belongs to the neurotoxin 02 (plectoxin) family. As to expression, expressed by the venom gland.

It localises to the secreted. Its function is as follows. Antagonist of L-type calcium channels (Cav1/CACNA1). Induces immediate clockwise gyration and flaccid paralysis after 6 hours at dose levels of 5 ug per mouse. The polypeptide is Omega-ctenitoxin-Pn1a (Phoneutria nigriventer (Brazilian armed spider)).